A 156-amino-acid chain; its full sequence is Ribosomal RNA large subunit methyltransferase H (156 aa).

Residues Leu-73, Gly-104, and 123–128 (LSPLTL) each bind S-adenosyl-L-methionine.

It belongs to the RNA methyltransferase RlmH family. Homodimer.

It is found in the cytoplasm. The enzyme catalyses pseudouridine(1915) in 23S rRNA + S-adenosyl-L-methionine = N(3)-methylpseudouridine(1915) in 23S rRNA + S-adenosyl-L-homocysteine + H(+). Its function is as follows. Specifically methylates the pseudouridine at position 1915 (m3Psi1915) in 23S rRNA. This is Ribosomal RNA large subunit methyltransferase H from Marinobacter nauticus (strain ATCC 700491 / DSM 11845 / VT8) (Marinobacter aquaeolei).